A 311-amino-acid polypeptide reads, in one-letter code: 4-hydroxy-3-methylbut-2-enyl diphosphate reductase (311 aa).

Cysteine 12 contacts [4Fe-4S] cluster. The (2E)-4-hydroxy-3-methylbut-2-enyl diphosphate site is built by histidine 41 and histidine 74. The dimethylallyl diphosphate site is built by histidine 41 and histidine 74. 2 residues coordinate isopentenyl diphosphate: histidine 41 and histidine 74. Cysteine 96 is a binding site for [4Fe-4S] cluster. Histidine 124 serves as a coordination point for (2E)-4-hydroxy-3-methylbut-2-enyl diphosphate. Histidine 124 serves as a coordination point for dimethylallyl diphosphate. Position 124 (histidine 124) interacts with isopentenyl diphosphate. Glutamate 126 serves as the catalytic Proton donor. Position 167 (threonine 167) interacts with (2E)-4-hydroxy-3-methylbut-2-enyl diphosphate. Residue cysteine 197 coordinates [4Fe-4S] cluster. Residues serine 225, serine 226, asparagine 227, and serine 269 each coordinate (2E)-4-hydroxy-3-methylbut-2-enyl diphosphate. Dimethylallyl diphosphate contacts are provided by serine 225, serine 226, asparagine 227, and serine 269. 4 residues coordinate isopentenyl diphosphate: serine 225, serine 226, asparagine 227, and serine 269.

It belongs to the IspH family. [4Fe-4S] cluster is required as a cofactor.

The catalysed reaction is isopentenyl diphosphate + 2 oxidized [2Fe-2S]-[ferredoxin] + H2O = (2E)-4-hydroxy-3-methylbut-2-enyl diphosphate + 2 reduced [2Fe-2S]-[ferredoxin] + 2 H(+). It catalyses the reaction dimethylallyl diphosphate + 2 oxidized [2Fe-2S]-[ferredoxin] + H2O = (2E)-4-hydroxy-3-methylbut-2-enyl diphosphate + 2 reduced [2Fe-2S]-[ferredoxin] + 2 H(+). Its pathway is isoprenoid biosynthesis; dimethylallyl diphosphate biosynthesis; dimethylallyl diphosphate from (2E)-4-hydroxy-3-methylbutenyl diphosphate: step 1/1. The protein operates within isoprenoid biosynthesis; isopentenyl diphosphate biosynthesis via DXP pathway; isopentenyl diphosphate from 1-deoxy-D-xylulose 5-phosphate: step 6/6. In terms of biological role, catalyzes the conversion of 1-hydroxy-2-methyl-2-(E)-butenyl 4-diphosphate (HMBPP) into a mixture of isopentenyl diphosphate (IPP) and dimethylallyl diphosphate (DMAPP). Acts in the terminal step of the DOXP/MEP pathway for isoprenoid precursor biosynthesis. The polypeptide is 4-hydroxy-3-methylbut-2-enyl diphosphate reductase (Aeromonas salmonicida (strain A449)).